We begin with the raw amino-acid sequence, 440 residues long: MRALFLLALGSIPALVSGQLSGSVGPLTSASTKGATKTCNILSYGAVADNSTDVGPAITSAWAACKSGGLVYIPSGNYALNTWVTLTGGSATAIQLDGIIYRTGTASGNMIAVTDTTDFELFSSTSKGAVQGFGYVYHAEGTYGARILRLTDVTHFSVHDVILVDAPAFHFTMDTCSDGEVYNMAIRGGNEGGLDGIDVWGSNIWVHDVEVTNKDECVTVKSPANNILVESIYCNWSGGCAMGSLGADTDVTDIVYRNVYTWSSNQMYMIKSNGGSGTVSNVLLENFIGHGNAYSLDIDGYWSSMTAVAGDGVQLNNITVKNWKGTEANGATRPPIRVVCSDTAPCTDLTLEDIAIWTESGSSELYLCRSAYGSGYCLKDSSSHTSYTTTSTVTAAPSGYSATTMAADLATAFGLTASIPIPTIPTSFYPGLTPYSALAG.

Residues 1-18 (MRALFLLALGSIPALVSG) form the signal peptide. Cysteines 39 and 65 form a disulfide. N-linked (GlcNAc...) asparagine glycosylation occurs at Asn-50. Residue Asp-215 is the Proton donor of the active site. The cysteines at positions 217 and 234 are disulfide-linked. His-290 is a catalytic residue. A glycan (N-linked (GlcNAc...) asparagine) is linked at Asn-317. 2 disulfide bridges follow: Cys-340–Cys-346 and Cys-368–Cys-377. O-linked (Man) threonine glycosylation is present at Thr-385. O-linked (Man) serine glycosylation occurs at Ser-386. O-linked (Man) threonine glycans are attached at residues Thr-388, Thr-389, and Thr-390. O-linked (Man) serine glycosylation is present at Ser-391. 2 O-linked (Man) threonine glycosylation sites follow: Thr-392 and Thr-394. O-linked (Man) serine glycosylation is found at Ser-398 and Ser-401. 3 O-linked (Man) threonine glycosylation sites follow: Thr-403, Thr-404, and Thr-416. O-linked (Man) serine glycosylation occurs at Ser-418. O-linked (Man) threonine glycans are attached at residues Thr-423 and Thr-426. Ser-427 and Ser-436 each carry an O-linked (Man) serine glycan.

Belongs to the glycosyl hydrolase 28 family. The N-terminus is blocked. Post-translationally, N-glycosylated and may also be O-glycosylated.

It localises to the secreted. The catalysed reaction is Endohydrolysis of alpha-D-GalA-(1-&gt;2)-alpha-L-Rha glycosidic bond in the rhamnogalacturonan I backbone with initial inversion of anomeric configuration releasing oligosaccharides with beta-D-GalA at the reducing end.. Pectinolytic enzymes consist of four classes of enzymes: pectine lyase, polygalacturonase, pectin methylesterase and rhamnogalacturonase. Has a positive effect in the apple hot-mash liquefaction process. Hydrolyzes alpha-D-galacturonopyranosyl-(1,2)-alpha-L-rhamnopyranosyl linkages in the backbone of the hairy regions of pectins. The polypeptide is Rhamnogalacturonase A (rhgA) (Aspergillus aculeatus).